Here is a 140-residue protein sequence, read N- to C-terminus: 3-hydroxyacyl-[acyl-carrier-protein] dehydratase FabZ (140 aa).

H47 is a catalytic residue.

This sequence belongs to the thioester dehydratase family. FabZ subfamily.

It localises to the cytoplasm. It carries out the reaction a (3R)-hydroxyacyl-[ACP] = a (2E)-enoyl-[ACP] + H2O. Its function is as follows. Involved in unsaturated fatty acids biosynthesis. Catalyzes the dehydration of short chain beta-hydroxyacyl-ACPs and long chain saturated and unsaturated beta-hydroxyacyl-ACPs. In Streptococcus gordonii (strain Challis / ATCC 35105 / BCRC 15272 / CH1 / DL1 / V288), this protein is 3-hydroxyacyl-[acyl-carrier-protein] dehydratase FabZ.